We begin with the raw amino-acid sequence, 227 residues long: MDVDIDPEQLFTEKMPKNYAQPDVLNHTFDLLSNLHKLLPNHLVEVLHSYRSEEDKNKCEKPEFSGLEKILARHQLPKEISLSPKPSLMPSWRRRIINNISGNWKKCHLWQKSTYEPPMGTIVARWTKKNLQPTEDLKSVIQRLSALGPIISVTPSGRQSAVVVFRDITSACKAVSAFQSMSGGSMFQCSWQHRFMAKNKTWSRKCTSKVHLEKRESTVGEPQELHN.

As to expression, expressed predominantly in the testis.

This is Testis expressed protein 56 from Mus musculus (Mouse).